A 70-amino-acid polypeptide reads, in one-letter code: Protein SlyX homolog (70 aa).

This sequence belongs to the SlyX family.

The chain is Protein SlyX homolog from Shewanella pealeana (strain ATCC 700345 / ANG-SQ1).